The primary structure comprises 327 residues: Lipoyl synthase (327 aa).

7 residues coordinate [4Fe-4S] cluster: cysteine 66, cysteine 71, cysteine 77, cysteine 92, cysteine 96, cysteine 99, and serine 306. Residues 78–295 enclose the Radical SAM core domain; the sequence is FSKGTATFMI…EKEAYELGFT (218 aa).

It belongs to the radical SAM superfamily. Lipoyl synthase family. [4Fe-4S] cluster serves as cofactor.

The protein localises to the cytoplasm. It catalyses the reaction [[Fe-S] cluster scaffold protein carrying a second [4Fe-4S](2+) cluster] + N(6)-octanoyl-L-lysyl-[protein] + 2 oxidized [2Fe-2S]-[ferredoxin] + 2 S-adenosyl-L-methionine + 4 H(+) = [[Fe-S] cluster scaffold protein] + N(6)-[(R)-dihydrolipoyl]-L-lysyl-[protein] + 4 Fe(3+) + 2 hydrogen sulfide + 2 5'-deoxyadenosine + 2 L-methionine + 2 reduced [2Fe-2S]-[ferredoxin]. It participates in protein modification; protein lipoylation via endogenous pathway; protein N(6)-(lipoyl)lysine from octanoyl-[acyl-carrier-protein]: step 2/2. Catalyzes the radical-mediated insertion of two sulfur atoms into the C-6 and C-8 positions of the octanoyl moiety bound to the lipoyl domains of lipoate-dependent enzymes, thereby converting the octanoylated domains into lipoylated derivatives. This Neisseria gonorrhoeae (strain ATCC 700825 / FA 1090) protein is Lipoyl synthase.